The following is a 233-amino-acid chain: Small ribosomal subunit protein uS2c (233 aa).

The protein belongs to the universal ribosomal protein uS2 family.

The protein resides in the plastid. The protein localises to the apicoplast. The polypeptide is Small ribosomal subunit protein uS2c (Toxoplasma gondii).